Reading from the N-terminus, the 197-residue chain is Small ribosomal subunit protein uS4c (197 aa).

One can recognise an S4 RNA-binding domain in the interval 84–143 (MRLDNIIFQLGMASTIPAARQLVCHRHILVNHRVVDIPSYRCKPRDIISIRNRPTSANAL).

Belongs to the universal ribosomal protein uS4 family. Part of the 30S ribosomal subunit. Contacts protein S5. The interaction surface between S4 and S5 is involved in control of translational fidelity.

It is found in the plastid. Its subcellular location is the chloroplast. Functionally, one of the primary rRNA binding proteins, it binds directly to 16S rRNA where it nucleates assembly of the body of the 30S subunit. Its function is as follows. With S5 and S12 plays an important role in translational accuracy. This Adiantum capillus-veneris (Maidenhair fern) protein is Small ribosomal subunit protein uS4c (rps4).